The following is a 456-amino-acid chain: tRNA modification GTPase MnmE (456 aa).

Residues arginine 25, glutamate 82, and lysine 121 each contribute to the (6S)-5-formyl-5,6,7,8-tetrahydrofolate site. A TrmE-type G domain is found at 217–379 (GIKVVIIGKP…LLDEIVKIAG (163 aa)). Position 227 (asparagine 227) interacts with K(+). GTP is bound by residues 227–232 (NAGKSS), 246–252 (TDIAGTT), and 271–274 (DTAG). A Mg(2+)-binding site is contributed by serine 231. K(+)-binding residues include threonine 246, isoleucine 248, and threonine 251. A Mg(2+)-binding site is contributed by threonine 252. Lysine 456 is a (6S)-5-formyl-5,6,7,8-tetrahydrofolate binding site.

This sequence belongs to the TRAFAC class TrmE-Era-EngA-EngB-Septin-like GTPase superfamily. TrmE GTPase family. In terms of assembly, homodimer. Heterotetramer of two MnmE and two MnmG subunits. It depends on K(+) as a cofactor.

It localises to the cytoplasm. Exhibits a very high intrinsic GTPase hydrolysis rate. Involved in the addition of a carboxymethylaminomethyl (cmnm) group at the wobble position (U34) of certain tRNAs, forming tRNA-cmnm(5)s(2)U34. This chain is tRNA modification GTPase MnmE, found in Endomicrobium trichonymphae.